The chain runs to 208 residues: Small ribosomal subunit protein uS4 (208 aa).

Positions 98–161 (QRLDNVVYRM…KTNPQIVRAI (64 aa)) constitute an S4 RNA-binding domain.

It belongs to the universal ribosomal protein uS4 family. As to quaternary structure, part of the 30S ribosomal subunit. Contacts protein S5. The interaction surface between S4 and S5 is involved in control of translational fidelity.

Its function is as follows. One of the primary rRNA binding proteins, it binds directly to 16S rRNA where it nucleates assembly of the body of the 30S subunit. In terms of biological role, with S5 and S12 plays an important role in translational accuracy. This chain is Small ribosomal subunit protein uS4, found in Campylobacter fetus subsp. fetus (strain 82-40).